A 151-amino-acid polypeptide reads, in one-letter code: Metallothiol transferase FosB (151 aa).

The 116-residue stretch at 4–119 (SINHVTYSVS…DGHKFELHTG (116 aa)) folds into the VOC domain. 3 residues coordinate Mg(2+): histidine 7, histidine 66, and glutamate 115. Catalysis depends on glutamate 115, which acts as the Proton donor/acceptor.

This sequence belongs to the fosfomycin resistance protein family. FosB subfamily. Homodimer. Mg(2+) serves as cofactor.

The protein localises to the cytoplasm. Functionally, metallothiol transferase which confers resistance to fosfomycin by catalyzing the addition of a thiol cofactor to fosfomycin. L-cysteine is probably the physiological thiol donor. The protein is Metallothiol transferase FosB of Staphylococcus saprophyticus subsp. saprophyticus (strain ATCC 15305 / DSM 20229 / NCIMB 8711 / NCTC 7292 / S-41).